We begin with the raw amino-acid sequence, 222 residues long: SHAAEVTAGYYNLHDRDDYRPIARMLTRHHASLNFTCAEMRDSEQSSQAMSAPEELVQQVWSAGWREGLNIACENALPRYDPTAYNTILRNARPHGINHSSPTEHKLFGFTYLRLSNQLLEGQNYVNFKTFVDRMHANLPHDPSVDPVAPLQRSGPEIPIEVILQAAQPKLDPFPFEDHTDLPVQCLGGIGGGEVECPAGGIGGEVQQDPTGGMGGELPPAV.

Threonine 36 is a substrate binding site. Glutamate 74 functions as the Proton acceptor in the catalytic mechanism. Residues 75–76 (NA) and arginine 114 each bind substrate.

Belongs to the glycosyl hydrolase 14 family.

It carries out the reaction Hydrolysis of (1-&gt;4)-alpha-D-glucosidic linkages in polysaccharides so as to remove successive maltose units from the non-reducing ends of the chains.. This is Beta-amylase (BMY1) from Secale cereale (Rye).